The primary structure comprises 661 residues: UvrABC system protein B (661 aa).

Residues 25 to 182 (AGLSSKKRSQ…NDLINLQYER (158 aa)) enclose the Helicase ATP-binding domain. Residue 38 to 45 (GITGSGKT) participates in ATP binding. The Beta-hairpin signature appears at 91-114 (YYDYYQPEAYIARTDTFIEKDSSI). In terms of domain architecture, Helicase C-terminal spans 430-592 (QIEDLISEIQ…IIPKTINRTI (163 aa)). In terms of domain architecture, UVR spans 621 to 656 (KTHIDKLKKEMLKAASNLEFEQAAKLRDQLKTLEEA).

Belongs to the UvrB family. In terms of assembly, forms a heterotetramer with UvrA during the search for lesions. Interacts with UvrC in an incision complex.

The protein resides in the cytoplasm. In terms of biological role, the UvrABC repair system catalyzes the recognition and processing of DNA lesions. A damage recognition complex composed of 2 UvrA and 2 UvrB subunits scans DNA for abnormalities. Upon binding of the UvrA(2)B(2) complex to a putative damaged site, the DNA wraps around one UvrB monomer. DNA wrap is dependent on ATP binding by UvrB and probably causes local melting of the DNA helix, facilitating insertion of UvrB beta-hairpin between the DNA strands. Then UvrB probes one DNA strand for the presence of a lesion. If a lesion is found the UvrA subunits dissociate and the UvrB-DNA preincision complex is formed. This complex is subsequently bound by UvrC and the second UvrB is released. If no lesion is found, the DNA wraps around the other UvrB subunit that will check the other stand for damage. The chain is UvrABC system protein B from Rickettsia massiliae (strain Mtu5).